Reading from the N-terminus, the 302-residue chain is MIIYKKNVNYLLIDGTSYLYRAYYAFLKFKNNFNKPCGAIYGMLNMLRSMLLKYPYSNIVVIFDSPQKTFRNELFIPYKKNRPKMPNDLKEQILPIHHIIKHIGIPIISIPHVEADDIIGTLATKLYKKKYFILISTNDKDLAQLVNIHIHVLIGTSNIVLDESKVKKKYGIIPKLIPDLLGLMGDNSDNIPGVPTVGKKTALILLKTFGSLENIYNNIEKIPKCLIKKAKTIYNNLHTYKKLAFLSQKLATIKTDINVNITTKKIKMLPPCTTEISNFFLHYKFYNWNKLLKQGLWLKNCK.

In terms of domain architecture, 5'-3' exonuclease spans 173 to 269 (IPKLIPDLLG…NITTKKIKML (97 aa)).

5'-3' exonuclease acting preferentially on double-stranded DNA. In Buchnera aphidicola subsp. Baizongia pistaciae (strain Bp), this protein is 5'-3' exonuclease (pol).